We begin with the raw amino-acid sequence, 339 residues long: 7,8-didemethyl-8-hydroxy-5-deazariboflavin synthase (339 aa).

Residues 25–256 (ATYSPAYTIV…PDITIQIPPN (232 aa)) enclose the Radical SAM core domain. Cys39, Cys43, and Cys46 together coordinate [4Fe-4S] cluster.

This sequence belongs to the radical SAM superfamily. CofG family. Consists of two subunits, CofG and CofH. [4Fe-4S] cluster serves as cofactor.

It carries out the reaction 5-amino-5-(4-hydroxybenzyl)-6-(D-ribitylimino)-5,6-dihydrouracil + S-adenosyl-L-methionine = 7,8-didemethyl-8-hydroxy-5-deazariboflavin + 5'-deoxyadenosine + L-methionine + NH4(+) + H(+). It functions in the pathway cofactor biosynthesis; coenzyme F0 biosynthesis. Its function is as follows. Catalyzes the radical-mediated synthesis of 7,8-didemethyl-8-hydroxy-5-deazariboflavin from 5-amino-5-(4-hydroxybenzyl)-6-(D-ribitylimino)-5,6-dihydrouracil. In Nostoc sp. (strain PCC 7120 / SAG 25.82 / UTEX 2576), this protein is 7,8-didemethyl-8-hydroxy-5-deazariboflavin synthase.